We begin with the raw amino-acid sequence, 147 residues long: Hemoglobin subunit epsilon (147 aa).

The Globin domain occupies 3–147 (HFTAEEKAAI…VAIALGHKYH (145 aa)). Residues Ser-14 and Ser-51 each carry the phosphoserine modification. Residues His-64 and His-93 each contribute to the heme b site.

This sequence belongs to the globin family. In terms of assembly, heterotetramer of two alpha chains and two epsilon chains in early embryonic hemoglobin Gower-2; two zeta chains and two epsilon chains in early embryonic hemoglobin Gower-1. In terms of tissue distribution, red blood cells.

In terms of biological role, the epsilon chain is a beta-type chain of early mammalian embryonic hemoglobin. The chain is Hemoglobin subunit epsilon (HBE1) from Pithecia irrorata (Gray monk saki).